Reading from the N-terminus, the 195-residue chain is Transcriptional regulator LdrP (195 aa).

One can recognise an HTH crp-type domain in the interval G110–A182. The H-T-H motif DNA-binding region spans H142 to A161.

In terms of assembly, homodimer.

In terms of biological role, activates transcription. Positively regulates PcrtB promoter upstream of the crtB operon in a cAMP-independent manner. Regulated genes include genes encoding DNA photolyase, phytoene synthase and cytochrome P450 monooxygenase, which are involved in carotenoid biosynthesis. Positively regulates the light-inducible gene cluster in the megaplasmid in a cAMP-independent manner. The sequence is that of Transcriptional regulator LdrP from Thermus thermophilus (strain ATCC 27634 / DSM 579 / HB8).